Here is a 540-residue protein sequence, read N- to C-terminus: Chaperonin GroEL (540 aa).

ATP is bound by residues 29 to 32 (TLGP), 86 to 90 (DGTTT), Gly413, and Asp493. The segment at 520–540 (AEKPEPKPAPGPADPGAGMDF) is disordered.

Belongs to the chaperonin (HSP60) family. As to quaternary structure, forms a cylinder of 14 subunits composed of two heptameric rings stacked back-to-back. Interacts with the co-chaperonin GroES.

The protein localises to the cytoplasm. The catalysed reaction is ATP + H2O + a folded polypeptide = ADP + phosphate + an unfolded polypeptide.. In terms of biological role, together with its co-chaperonin GroES, plays an essential role in assisting protein folding. The GroEL-GroES system forms a nano-cage that allows encapsulation of the non-native substrate proteins and provides a physical environment optimized to promote and accelerate protein folding. The protein is Chaperonin GroEL of Tropheryma whipplei (strain TW08/27) (Whipple's bacillus).